Reading from the N-terminus, the 408-residue chain is Phosphoenolpyruvate/phosphate translocator 1, chloroplastic (408 aa).

The N-terminal 66 residues, 1–66 (MQSAAAVGLL…ISARRIGLVP (66 aa)), are a transit peptide targeting the chloroplast. 7 helical membrane-spanning segments follow: residues 105-125 (TLQL…FNIY), 139-159 (ITNV…ITGI), 165-185 (ISGA…MGNL), 222-242 (PTPF…LASL), 245-262 (ASFN…NVTF), 283-303 (ITLF…VTLL), and 375-395 (TPVS…VFLY). Residues 124–241 (IYNKQVLKVF…PIVGGVALAS (118 aa)) enclose the EamA domain.

Belongs to the TPT transporter family. PPT (TC 2.A.7.9) subfamily.

It is found in the plastid. Its subcellular location is the chloroplast membrane. Its function is as follows. Phosphoenolpyruvate/phosphate translocator that transports phosphoenolpyruvate (PEP) and dihydroxyacetone phosphate. The protein is Phosphoenolpyruvate/phosphate translocator 1, chloroplastic (PPT1) of Oryza sativa subsp. japonica (Rice).